Reading from the N-terminus, the 283-residue chain is Pyridoxine/pyridoxal/pyridoxamine kinase (283 aa).

S23 and H59 together coordinate substrate. Position 125 (D125) interacts with ATP. Y136 serves as a coordination point for Mg(2+). ATP is bound by residues T157, E162, T195, 222 to 225 (HAHV), and T232. E162 contacts Mg(2+). D234 provides a ligand contact to substrate.

This sequence belongs to the pyridoxine kinase family. PdxK subfamily. As to quaternary structure, homodimer. It depends on Mg(2+) as a cofactor.

It catalyses the reaction pyridoxal + ATP = pyridoxal 5'-phosphate + ADP + H(+). The enzyme catalyses pyridoxine + ATP = pyridoxine 5'-phosphate + ADP + H(+). The catalysed reaction is pyridoxamine + ATP = pyridoxamine 5'-phosphate + ADP + H(+). Its pathway is cofactor metabolism; pyridoxal 5'-phosphate salvage; pyridoxal 5'-phosphate from pyridoxal: step 1/1. It functions in the pathway cofactor metabolism; pyridoxal 5'-phosphate salvage; pyridoxine 5'-phosphate from pyridoxine: step 1/1. The protein operates within cofactor metabolism; pyridoxal 5'-phosphate salvage; pyridoxamine 5'-phosphate from pyridoxamine: step 1/1. Functionally, B6-vitamer kinase involved in the salvage pathway of pyridoxal 5'-phosphate (PLP). Catalyzes the phosphorylation of pyridoxine (PN), pyridoxal (PL), and pyridoxamine (PM), forming their respective 5'-phosphorylated esters, i.e. PNP, PLP and PMP. This chain is Pyridoxine/pyridoxal/pyridoxamine kinase, found in Bordetella pertussis (strain Tohama I / ATCC BAA-589 / NCTC 13251).